A 427-amino-acid chain; its full sequence is Serine--tRNA ligase (427 aa).

231–233 is an L-serine binding site; it reads TAE. 262–264 is a binding site for ATP; the sequence is RSE. Residue glutamate 285 participates in L-serine binding. Position 349-352 (349-352) interacts with ATP; sequence EISS. Residue serine 385 coordinates L-serine.

Belongs to the class-II aminoacyl-tRNA synthetase family. Type-1 seryl-tRNA synthetase subfamily. As to quaternary structure, homodimer. The tRNA molecule binds across the dimer.

The protein resides in the cytoplasm. It carries out the reaction tRNA(Ser) + L-serine + ATP = L-seryl-tRNA(Ser) + AMP + diphosphate + H(+). The catalysed reaction is tRNA(Sec) + L-serine + ATP = L-seryl-tRNA(Sec) + AMP + diphosphate + H(+). Its pathway is aminoacyl-tRNA biosynthesis; selenocysteinyl-tRNA(Sec) biosynthesis; L-seryl-tRNA(Sec) from L-serine and tRNA(Sec): step 1/1. In terms of biological role, catalyzes the attachment of serine to tRNA(Ser). Is also able to aminoacylate tRNA(Sec) with serine, to form the misacylated tRNA L-seryl-tRNA(Sec), which will be further converted into selenocysteinyl-tRNA(Sec). The protein is Serine--tRNA ligase of Brucella melitensis biotype 2 (strain ATCC 23457).